A 299-amino-acid polypeptide reads, in one-letter code: Protein U23 (299 aa).

Residues 1-27 (MRKSEFNAKSCFLMIGICVFNLNSSSC) form the signal peptide. A helical membrane pass occupies residues 247-267 (LVIWICGISFVGAFIIVIVIL).

The protein localises to the host membrane. This chain is Protein U23 (U23), found in Human herpesvirus 6B (strain Z29) (HHV-6 variant B).